Here is a 432-residue protein sequence, read N- to C-terminus: Zinc finger protein 829 (432 aa).

The KRAB domain occupies 35 to 106 (VMFRDVSIDF…DRELTRGLCS (72 aa)). The segment at 156-178 (WECKICGKTFNQNSQFIQHQRIH) adopts a C2H2-type 1 zinc-finger fold. The C2H2-type 2; degenerate zinc-finger motif lies at 184–206 (YESKEYGKSFSRGSLVTRHQRIH). C2H2-type zinc fingers lie at residues 212 to 234 (YECK…QRIH), 240 to 262 (YECK…QRIH), 268 to 290 (YECK…LRIH), 296 to 318 (YECK…QRMH), 324 to 346 (YECK…HRIH), 352 to 374 (YECE…QRIH), 380 to 402 (YECN…QRIH), and 408 to 430 (YDCK…EGIH).

Belongs to the krueppel C2H2-type zinc-finger protein family.

The protein localises to the nucleus. In terms of biological role, may be involved in transcriptional regulation. This Homo sapiens (Human) protein is Zinc finger protein 829 (ZNF829).